We begin with the raw amino-acid sequence, 354 residues long: Biotin synthase (354 aa).

In terms of domain architecture, Radical SAM core spans 41 to 268 (NEVQISRLLS…LSRVRLSAGR (228 aa)). [4Fe-4S] cluster is bound by residues Cys-56, Cys-60, and Cys-63. Positions 100, 131, 191, and 263 each coordinate [2Fe-2S] cluster.

Belongs to the radical SAM superfamily. Biotin synthase family. As to quaternary structure, homodimer. The cofactor is [4Fe-4S] cluster. It depends on [2Fe-2S] cluster as a cofactor.

It catalyses the reaction (4R,5S)-dethiobiotin + (sulfur carrier)-SH + 2 reduced [2Fe-2S]-[ferredoxin] + 2 S-adenosyl-L-methionine = (sulfur carrier)-H + biotin + 2 5'-deoxyadenosine + 2 L-methionine + 2 oxidized [2Fe-2S]-[ferredoxin]. Its pathway is cofactor biosynthesis; biotin biosynthesis; biotin from 7,8-diaminononanoate: step 2/2. Functionally, catalyzes the conversion of dethiobiotin (DTB) to biotin by the insertion of a sulfur atom into dethiobiotin via a radical-based mechanism. The sequence is that of Biotin synthase from Shewanella amazonensis (strain ATCC BAA-1098 / SB2B).